A 375-amino-acid polypeptide reads, in one-letter code: Chaperone protein DnaJ (375 aa).

Residues 5–70 (DYYELLGISR…EKRAAYDQYG (66 aa)) form the J domain. A CR-type zinc finger spans residues 132-210 (GTTKDIKIHT…CHGDGRVNKA (79 aa)). Zn(2+)-binding residues include C145, C148, C162, C165, C184, C187, C198, and C201. CXXCXGXG motif repeat units follow at residues 145-152 (CDTCHGTG), 162-169 (CPHCHGAG), 184-191 (CHFCHGTG), and 198-205 (CKTCHGDG).

This sequence belongs to the DnaJ family. In terms of assembly, homodimer. Requires Zn(2+) as cofactor.

It is found in the cytoplasm. Functionally, participates actively in the response to hyperosmotic and heat shock by preventing the aggregation of stress-denatured proteins and by disaggregating proteins, also in an autonomous, DnaK-independent fashion. Unfolded proteins bind initially to DnaJ; upon interaction with the DnaJ-bound protein, DnaK hydrolyzes its bound ATP, resulting in the formation of a stable complex. GrpE releases ADP from DnaK; ATP binding to DnaK triggers the release of the substrate protein, thus completing the reaction cycle. Several rounds of ATP-dependent interactions between DnaJ, DnaK and GrpE are required for fully efficient folding. Also involved, together with DnaK and GrpE, in the DNA replication of plasmids through activation of initiation proteins. The chain is Chaperone protein DnaJ from Aggregatibacter actinomycetemcomitans (Actinobacillus actinomycetemcomitans).